Reading from the N-terminus, the 329-residue chain is D-alanine--D-alanine ligase (329 aa).

One can recognise an ATP-grasp domain in the interval 120–326 (KLWLSAIGIP…FAHYLEQILR (207 aa)). 150 to 205 (ALAKWGKVFIKAASQGSSVGCYSASNETDLLQGIKDAFGYSEQVLIEKAVKPRELE) is an ATP binding site. Asp-280, Glu-293, and Asn-295 together coordinate Mg(2+).

It belongs to the D-alanine--D-alanine ligase family. Requires Mg(2+) as cofactor. Mn(2+) is required as a cofactor.

It is found in the cytoplasm. The enzyme catalyses 2 D-alanine + ATP = D-alanyl-D-alanine + ADP + phosphate + H(+). The protein operates within cell wall biogenesis; peptidoglycan biosynthesis. Its function is as follows. Cell wall formation. The chain is D-alanine--D-alanine ligase from Aeromonas salmonicida (strain A449).